We begin with the raw amino-acid sequence, 131 residues long: Interleukin-13 (131 aa).

The signal sequence occupies residues 1–18 (MALWLTVVIALTCLGGLA). Residues asparagine 38, asparagine 48, asparagine 56, and asparagine 71 are each glycosylated (N-linked (GlcNAc...) asparagine). 2 cysteine pairs are disulfide-bonded: cysteine 47/cysteine 75 and cysteine 63/cysteine 89.

It belongs to the IL-4/IL-13 family. In terms of assembly, interacts with IL13RA2.

The protein localises to the secreted. Its function is as follows. Cytokine that plays important roles in allergic inflammation and immune response to parasite infection. Synergizes with IL2 in regulating interferon-gamma synthesis. Stimulates B-cell proliferation, and activation of eosinophils, basophils, and mast cells. Plays an important role in controlling IL33 activity by modulating the production of transmembrane and soluble forms of interleukin-1 receptor-like 1/IL1RL1. Displays the capacity to antagonize Th1-driven proinflammatory immune response and downregulates synthesis of many proinflammatory cytokines including IL1, IL6, IL10, IL12 and TNF-alpha through a mechanism that partially involves suppression of NF-kappa-B. Also functions on nonhematopoietic cells, including endothelial cells where it induces vascular cell adhesion protein 1/VCAM1, which is important in the recruitment of eosinophils. Exerts its biological effects through its receptors which comprises the IL4R chain and the IL13RA1 chain, to activate JAK1 and TYK2, leading to the activation of STAT6. Aside from IL13RA1, another receptor IL13RA2 acts as a high affinity decoy for IL13 and mediates internalization and depletion of extracellular IL13. The chain is Interleukin-13 (IL13) from Canis lupus familiaris (Dog).